Reading from the N-terminus, the 263-residue chain is Proteasome subunit beta type-5 (263 aa).

Residues 1–59 (MALASVLERPLSVNRRGFFGLGGRADLLDLGPGSPSDGLSLAAPSWGVPEEPRIEILHG) constitute a propeptide, removed in mature form. The active-site Nucleophile is Thr-60. Position 108 (Ala-108) interacts with bortezomib.

This sequence belongs to the peptidase T1B family. The 26S proteasome consists of a 20S proteasome core and two 19S regulatory subunits. The 20S proteasome core is a barrel-shaped complex made of 28 subunits that are arranged in four stacked rings. The two outer rings are each formed by seven alpha subunits, and the two inner rings are formed by seven beta subunits. The proteolytic activity is exerted by three beta-subunits PSMB5, PSMB6 and PSMB7. Directly interacts with POMP. Interacts with ABCB1 and TAP1.

It localises to the cytoplasm. The protein resides in the nucleus. The catalysed reaction is Cleavage of peptide bonds with very broad specificity.. Functionally, component of the 20S core proteasome complex involved in the proteolytic degradation of most intracellular proteins. This complex plays numerous essential roles within the cell by associating with different regulatory particles. Associated with two 19S regulatory particles, forms the 26S proteasome and thus participates in the ATP-dependent degradation of ubiquitinated proteins. The 26S proteasome plays a key role in the maintenance of protein homeostasis by removing misfolded or damaged proteins that could impair cellular functions, and by removing proteins whose functions are no longer required. Associated with the PA200 or PA28, the 20S proteasome mediates ubiquitin-independent protein degradation. This type of proteolysis is required in several pathways including spermatogenesis (20S-PA200 complex) or generation of a subset of MHC class I-presented antigenic peptides (20S-PA28 complex). Within the 20S core complex, PSMB5 displays a chymotrypsin-like activity. The chain is Proteasome subunit beta type-5 from Bos taurus (Bovine).